The primary structure comprises 892 residues: Translation initiation factor IF-2 (892 aa).

The interval T66 to A305 is disordered. The segment covering S68–V82 has biased composition (polar residues). Basic and acidic residues-rich tracts occupy residues V93–V159 and D166–K216. The segment covering G254–K269 has biased composition (basic residues). Residues H270 to A282 show a composition bias toward basic and acidic residues. A tr-type G domain is found at P391 to K560. Positions G400–T407 are G1. G400–T407 serves as a coordination point for GTP. The tract at residues G425–H429 is G2. A G3 region spans residues D446 to G449. Residues D446 to H450 and N500 to D503 contribute to the GTP site. The G4 stretch occupies residues N500–D503. The interval S536–K538 is G5.

The protein belongs to the TRAFAC class translation factor GTPase superfamily. Classic translation factor GTPase family. IF-2 subfamily.

The protein localises to the cytoplasm. Its function is as follows. One of the essential components for the initiation of protein synthesis. Protects formylmethionyl-tRNA from spontaneous hydrolysis and promotes its binding to the 30S ribosomal subunits. Also involved in the hydrolysis of GTP during the formation of the 70S ribosomal complex. The sequence is that of Translation initiation factor IF-2 from Salmonella typhi.